The following is a 338-amino-acid chain: Taste receptor type 2 member 39 (338 aa).

Residues 1–30 (MLGRCFPPDTKEKQQLRMTKLCDPAESELS) are Extracellular-facing. The helical transmembrane segment at 31–51 (PFLITLILAVLLAEYLIGIIA) threads the bilayer. Over 52–74 (NGFIMAIHAAEWVQNKAVSTSGR) the chain is Cytoplasmic. The chain crosses the membrane as a helical span at residues 75-95 (ILVFLSVSRIALQSLMMLEIT). At 96–116 (ISSTSLSFYSEDAVYYAFKIS) the chain is on the extracellular side. The helical transmembrane segment at 117 to 137 (FIFLNFCSLWFAAWLSFFYFV) threads the bilayer. The Cytoplasmic segment spans residues 138–156 (KIANFSYPLFLKLRWRITG). The helical transmembrane segment at 157-177 (LIPWLLWLSVFISFSHSMFCI) threads the bilayer. Topologically, residues 178–205 (NIXTVYCNNSFPIHSSNSTKKTYLSEIN) are extracellular. 2 N-linked (GlcNAc...) asparagine glycosylation sites follow: Asn185 and Asn194. The helical transmembrane segment at 206 to 226 (VVGLAFFFNLGIVTPLIMFIL) threads the bilayer. Residues 227–262 (TATLLILSLKRHTLHMGSNATGSNDPSMEAHMGAIK) lie on the Cytoplasmic side of the membrane. A helical transmembrane segment spans residues 263-283 (ATSYFLILYIFNAVALFIYLS). Topologically, residues 284-291 (NMFDINSL) are extracellular. Residues 292 to 312 (WNNLCQIIMAAYPASHSILLI) form a helical membrane-spanning segment. At 313–338 (QDNPGLRRAWKRLQLRLHLYPKEWTL) the chain is on the cytoplasmic side.

It belongs to the G-protein coupled receptor T2R family.

It localises to the membrane. Its function is as follows. Receptor that may play a role in the perception of bitterness and is gustducin-linked. May play a role in sensing the chemical composition of the gastrointestinal content. The activity of this receptor may stimulate alpha gustducin, mediate PLC-beta-2 activation and lead to the gating of TRPM5. This chain is Taste receptor type 2 member 39 (TAS2R39), found in Gorilla gorilla gorilla (Western lowland gorilla).